We begin with the raw amino-acid sequence, 108 residues long: Small ribosomal subunit protein bS16 (108 aa).

Positions 82 to 108 are disordered; the sequence is ESKFSKNTQTENKKPVSKKTTKKSKDN. Residues 96-108 are compositionally biased toward basic residues; sequence PVSKKTTKKSKDN.

It belongs to the bacterial ribosomal protein bS16 family.

The chain is Small ribosomal subunit protein bS16 from Mycoplasma capricolum subsp. capricolum (strain California kid / ATCC 27343 / NCTC 10154).